We begin with the raw amino-acid sequence, 565 residues long: Formate--tetrahydrofolate ligase (565 aa).

Residue 73-80 participates in ATP binding; the sequence is TPAGEGKS.

The protein belongs to the formate--tetrahydrofolate ligase family.

It catalyses the reaction (6S)-5,6,7,8-tetrahydrofolate + formate + ATP = (6R)-10-formyltetrahydrofolate + ADP + phosphate. It participates in one-carbon metabolism; tetrahydrofolate interconversion. The protein is Formate--tetrahydrofolate ligase of Arthrobacter sp. (strain FB24).